The primary structure comprises 1956 residues: Probable cation-transporting ATPase 1 (1956 aa).

Topologically, residues 1–35 (MHLMCTGLRNEKLINDRKILYGECNLNIKSDSFII) are cytoplasmic. The chain crosses the membrane as a helical span at residues 36 to 58 (LLFKEIMNPFFIFQIFAMIVWSL). Residues 59 to 61 (DNY) are Extracellular-facing. A helical transmembrane segment spans residues 62-80 (IEYTISILFITSISIILEL). The Cytoplasmic portion of the chain corresponds to 81–407 (KNTIKNQKKI…KKELNLINDS (327 aa)). A helical transmembrane segment spans residues 408–427 (YKFLIILIIYALFSVFILLY). At 428 to 440 (ITLSNNEYTNHII) the chain is on the extracellular side. The chain crosses the membrane as a helical span at residues 441–462 (IKCLDIITDAIPPALPTTLTVG). Residues 463-1818 (ISIAISRLKK…SLVNSFQLFK (1356 aa)) lie on the Cytoplasmic side of the membrane. Asp496 acts as the 4-aspartylphosphate intermediate in catalysis. Residues 901–938 (YGNNNDDNNDDDNNNDDDNNDDNNNDDNNNDDNNDDNN) are disordered. Acidic residues predominate over residues 907 to 935 (DNNDDDNNNDDDNNDDNNNDDNNNDDNND). Mg(2+) is bound by residues Asp1760 and Asp1764. A helical membrane pass occupies residues 1819 to 1837 (FISLYSIMQCSQVLILYSI). The Extracellular portion of the chain corresponds to 1838-1845 (SNKLTDNQ). Residues 1846-1863 (YIFIDIVTILPLSIFMCW) traverse the membrane as a helical segment. The Cytoplasmic segment spans residues 1864 to 1881 (TSASEKLSKNIPIGKLFS). Residues 1882–1905 (FPILISIYGQIIIQLFFVMISLVV) traverse the membrane as a helical segment. Over 1906-1928 (LMNLSFYKYDKNKVMKEKSDDTY) the chain is Extracellular. The helical transmembrane segment at 1929-1952 (LYKAQKYTLIYSLLFSKFVYVYIF) threads the bilayer. Topologically, residues 1953-1956 (KYKE) are cytoplasmic.

It belongs to the cation transport ATPase (P-type) (TC 3.A.3) family. Type V subfamily.

The protein resides in the membrane. It carries out the reaction ATP + H2O = ADP + phosphate + H(+). This Plasmodium falciparum protein is Probable cation-transporting ATPase 1.